The primary structure comprises 269 residues: Indole-3-glycerol phosphate synthase (269 aa).

This sequence belongs to the TrpC family.

It catalyses the reaction 1-(2-carboxyphenylamino)-1-deoxy-D-ribulose 5-phosphate + H(+) = (1S,2R)-1-C-(indol-3-yl)glycerol 3-phosphate + CO2 + H2O. Its pathway is amino-acid biosynthesis; L-tryptophan biosynthesis; L-tryptophan from chorismate: step 4/5. The protein is Indole-3-glycerol phosphate synthase of Roseiflexus sp. (strain RS-1).